Consider the following 280-residue polypeptide: Uroporphyrinogen-III C-methyltransferase (280 aa).

Residues proline 24, 100–102 (GGD), 130–131 (TA), methionine 184, alanine 213, and alanine 241 each bind S-adenosyl-L-homocysteine.

Belongs to the precorrin methyltransferase family. As to quaternary structure, homodimer.

The catalysed reaction is uroporphyrinogen III + 2 S-adenosyl-L-methionine = precorrin-2 + 2 S-adenosyl-L-homocysteine + H(+). It catalyses the reaction uroporphyrinogen III + S-adenosyl-L-methionine = precorrin-1 + S-adenosyl-L-homocysteine + H(+). It carries out the reaction precorrin-1 + S-adenosyl-L-methionine = precorrin-2 + S-adenosyl-L-homocysteine. Its pathway is cofactor biosynthesis; adenosylcobalamin biosynthesis; precorrin-2 from uroporphyrinogen III: step 1/1. It functions in the pathway porphyrin-containing compound metabolism; siroheme biosynthesis; precorrin-2 from uroporphyrinogen III: step 1/1. With respect to regulation, S-adenosylhomocysteine is an extremely powerful competitive inhibitor of the uroporphyrinogen III methylation. SUMT exhibits a substrate inhibition phenomenon at uroporphyrinogen III concentrations above 2 uM; this property might play a regulatory role in cobalamin biosynthesis. The enzyme activity is completely insensitive to feedback inhibition by cobalamin and corrinoid intermediates. In terms of biological role, catalyzes the two successive C-2 and C-7 methylation reactions involved in the conversion of uroporphyrinogen III to precorrin-2 via the intermediate formation of precorrin-1. It is a step in the biosynthesis of both cobalamin (vitamin B12) and siroheme. Neither uroporphyrin III nor the chlorin (factor I) is a substrate of SUMT. The protein is Uroporphyrinogen-III C-methyltransferase of Sinorhizobium sp.